Reading from the N-terminus, the 155-residue chain is Small ribosomal subunit protein uS7cz/uS7cy (155 aa).

This sequence belongs to the universal ribosomal protein uS7 family. Part of the 30S ribosomal subunit.

Its subcellular location is the plastid. It is found in the chloroplast. One of the primary rRNA binding proteins, it binds directly to 16S rRNA where it nucleates assembly of the head domain of the 30S subunit. The polypeptide is Small ribosomal subunit protein uS7cz/uS7cy (rps7-A) (Lotus japonicus (Lotus corniculatus var. japonicus)).